The following is a 183-amino-acid chain: Peptidyl-tRNA hydrolase (183 aa).

Tyr-15 lines the tRNA pocket. The Proton acceptor role is filled by His-20. TRNA contacts are provided by Tyr-67 and Asn-69.

This sequence belongs to the PTH family. In terms of assembly, monomer.

It is found in the cytoplasm. The enzyme catalyses an N-acyl-L-alpha-aminoacyl-tRNA + H2O = an N-acyl-L-amino acid + a tRNA + H(+). Hydrolyzes ribosome-free peptidyl-tRNAs (with 1 or more amino acids incorporated), which drop off the ribosome during protein synthesis, or as a result of ribosome stalling. In terms of biological role, catalyzes the release of premature peptidyl moieties from peptidyl-tRNA molecules trapped in stalled 50S ribosomal subunits, and thus maintains levels of free tRNAs and 50S ribosomes. The polypeptide is Peptidyl-tRNA hydrolase (Chlamydia abortus (strain DSM 27085 / S26/3) (Chlamydophila abortus)).